Here is a 585-residue protein sequence, read N- to C-terminus: PiggyBac transposable element-derived protein 4 (585 aa).

Residues 1–73 form a disordered region; that stretch reads MSNPRKRSIP…STSSDSGRSM (73 aa). A compositionally biased stretch (acidic residues) spans 25–40; the sequence is DSFDESDFSEIDDSDN. Residues 47–61 are compositionally biased toward basic and acidic residues; sequence EADKIRPLSHLESDG. The segment covering 62–72 has biased composition (low complexity); it reads KSSTSSDSGRS.

In Homo sapiens (Human), this protein is PiggyBac transposable element-derived protein 4 (PGBD4).